The chain runs to 444 residues: MIKMIKNVAIIYPNKFKAGISCLAVHVLANHLSKYRDLNVGVYFLENYDRIKNFDAIFITLQYENDYFNAIKIIKDLRKNNPNAIFVAGGPCVMENFFPIAEFFDVFIVGEIEGSDVMLKVINREFDVEGVYSKYLEKDKVKRIYPKKLTIDDYPIYQPTSEEGAYGKSFLLEIGRGCPRRCRFCLARAIYYPPRFRKLDDLMYLAEEGVKVNKVNKVALIAPSVGDYKYIVELCNFLDDMGVHISPSSLRADTLNDDLMRILKPKTLTIAPEAGSERLREFIKKDIRERDIANAIDLAKKFGVEKVKLYFMVGIPTETDEDIEELINLTKKVKKEIRKVEISVNPMIPKPHTDFEVEEFDLSSKKKIKYIEKALKKEGIRVEYENFNSMICQCILARGDENLSKYLDYSKNPTSLISALKKDRLLDKYLGRFEDKGVWKNIIL.

The Radical SAM core domain occupies 164 to 381; that stretch reads GAYGKSFLLE…EKALKKEGIR (218 aa). 3 residues coordinate [4Fe-4S] cluster: cysteine 178, cysteine 182, and cysteine 185.

The cofactor is [4Fe-4S] cluster.

This is an uncharacterized protein from Methanocaldococcus jannaschii (strain ATCC 43067 / DSM 2661 / JAL-1 / JCM 10045 / NBRC 100440) (Methanococcus jannaschii).